The sequence spans 513 residues: Plexin domain-containing protein 2 (513 aa).

Positions 1–24 (MGARSESLVGVVLLFQLLADRLWC) are cleaved as a signal peptide. The Extracellular portion of the chain corresponds to 25-438 (AATASDSLYD…AEMKTGTLHT (414 aa)). Asn88, Asn145, Asn198, Asn206, Asn222, and Asn330 each carry an N-linked (GlcNAc...) asparagine glycan. The PSI domain occupies 312–357 (TCLQFNSCSSCVSSMIGFNCSWCNIPQRCSSGFDRHRQDWVENGCT). A helical transmembrane segment spans residues 439-459 (GLIIGILILVLLIITAILVAV). Topologically, residues 460–513 (YMYHHPTSSASLFLIERRPSRWPAMKFRRGSGHPAYAEVEPIGEKEGFIVSEQC) are cytoplasmic.

It belongs to the plexin family.

Its subcellular location is the membrane. The sequence is that of Plexin domain-containing protein 2 (plxdc2) from Xenopus laevis (African clawed frog).